Consider the following 347-residue polypeptide: tRNA N6-adenosine threonylcarbamoyltransferase (347 aa).

Fe cation is bound by residues histidine 117 and histidine 121. Substrate is bound by residues 140–144, aspartate 173, glycine 186, and asparagine 280; that span reads LVSGG. Aspartate 308 lines the Fe cation pocket.

It belongs to the KAE1 / TsaD family. It depends on Fe(2+) as a cofactor.

Its subcellular location is the cytoplasm. The catalysed reaction is L-threonylcarbamoyladenylate + adenosine(37) in tRNA = N(6)-L-threonylcarbamoyladenosine(37) in tRNA + AMP + H(+). Functionally, required for the formation of a threonylcarbamoyl group on adenosine at position 37 (t(6)A37) in tRNAs that read codons beginning with adenine. Is involved in the transfer of the threonylcarbamoyl moiety of threonylcarbamoyl-AMP (TC-AMP) to the N6 group of A37, together with TsaE and TsaB. TsaD likely plays a direct catalytic role in this reaction. This is tRNA N6-adenosine threonylcarbamoyltransferase from Psychrobacter sp. (strain PRwf-1).